A 212-amino-acid chain; its full sequence is Glycerol-3-phosphate acyltransferase (212 aa).

The next 5 helical transmembrane spans lie at 3–23 (LILLIIAAYLLGSIPTGLWIG), 69–89 (LLPMWLGVTHISPLLFGFFAI), 110–130 (AGILLGFAPFYLIFLLFIFFF), 143–163 (VIAASIAIITVLIFPALHFLL), and 165–185 (DYDFLFVLIVISAGSLIIIRH).

The protein belongs to the PlsY family. As to quaternary structure, probably interacts with PlsX.

Its subcellular location is the cell membrane. It catalyses the reaction an acyl phosphate + sn-glycerol 3-phosphate = a 1-acyl-sn-glycero-3-phosphate + phosphate. It functions in the pathway lipid metabolism; phospholipid metabolism. Its function is as follows. Catalyzes the transfer of an acyl group from acyl-phosphate (acyl-PO(4)) to glycerol-3-phosphate (G3P) to form lysophosphatidic acid (LPA). This enzyme utilizes acyl-phosphate as fatty acyl donor, but not acyl-CoA or acyl-ACP. The protein is Glycerol-3-phosphate acyltransferase of Streptococcus mutans serotype c (strain ATCC 700610 / UA159).